The sequence spans 652 residues: DNA ligase (652 aa).

Residues 29-33 (DSEYD), 78-79 (SL), and Glu-107 each bind NAD(+). Lys-109 functions as the N6-AMP-lysine intermediate in the catalytic mechanism. Residues Arg-130, Glu-164, Lys-278, and Lys-302 each contribute to the NAD(+) site. Positions 395, 398, 413, and 418 each coordinate Zn(2+). The region spanning 577–652 (VADAALSGLT…VRDEAWLESL (76 aa)) is the BRCT domain.

Belongs to the NAD-dependent DNA ligase family. LigA subfamily. Requires Mg(2+) as cofactor. Mn(2+) is required as a cofactor.

It carries out the reaction NAD(+) + (deoxyribonucleotide)n-3'-hydroxyl + 5'-phospho-(deoxyribonucleotide)m = (deoxyribonucleotide)n+m + AMP + beta-nicotinamide D-nucleotide.. DNA ligase that catalyzes the formation of phosphodiester linkages between 5'-phosphoryl and 3'-hydroxyl groups in double-stranded DNA using NAD as a coenzyme and as the energy source for the reaction. It is essential for DNA replication and repair of damaged DNA. The chain is DNA ligase from Streptococcus pneumoniae serotype 2 (strain D39 / NCTC 7466).